Reading from the N-terminus, the 323-residue chain is Olfactory receptor 1E2 (323 aa).

Residues 1-25 lie on the Extracellular side of the membrane; the sequence is MMGQNQTSISDFLLLGLPIQPEQQN. Asn5 is a glycosylation site (N-linked (GlcNAc...) asparagine). A helical transmembrane segment spans residues 26–49; the sequence is LCYALFLAMYLTTLLGNLLIIVLI. Residues 50–57 lie on the Cytoplasmic side of the membrane; the sequence is RLDSHLHT. Residues 58 to 79 traverse the membrane as a helical segment; sequence PVYLFLSNLSFSDLCFSSVTMP. Residues 80–100 are Extracellular-facing; that stretch reads KLLQNMQNQDPSIPYADCLTQ. Cysteines 97 and 198 form a disulfide. The chain crosses the membrane as a helical span at residues 101–120; sequence MYFFLYFSDLESFLLVAMAY. The Cytoplasmic segment spans residues 121–148; sequence DRYVAICFPMHYTAICFLLHYTAIMSPM. A helical membrane pass occupies residues 149–167; it reads LCLSVVALSWVLTTFHAML. At 168–205 the chain is on the extracellular side; that stretch reads HTLLMARLCFCADNVIPHFFCDMSALLKLACSDTRVNE. The helical transmembrane segment at 206–228 threads the bilayer; that stretch reads WVIFIMGGLILVIPFLLILGSYA. Over 229–245 the chain is Cytoplasmic; it reads RIVSSILKVPSSKGICK. The chain crosses the membrane as a helical span at residues 246–269; that stretch reads AFSTCGSHLSVVSLFYGTVIGLYL. At 270–281 the chain is on the extracellular side; that stretch reads CPSANSSTLKDT. Asn274 carries N-linked (GlcNAc...) asparagine glycosylation. Residues 282–301 traverse the membrane as a helical segment; sequence VMAMMYTVVTPMLTPFIYSL. The Cytoplasmic segment spans residues 302–323; it reads RNRDMKGALERVICKRKNPFLL.

Belongs to the G-protein coupled receptor 1 family.

Its subcellular location is the cell membrane. In terms of biological role, odorant receptor. The sequence is that of Olfactory receptor 1E2 (OR1E2) from Homo sapiens (Human).